The chain runs to 145 residues: uncharacterized protein (145 aa).

Ser-67 bears the Phosphoserine mark.

As to expression, expressed in retina and retinoblastoma.

This is an uncharacterized protein from Homo sapiens (Human).